A 205-amino-acid chain; its full sequence is Molybdenum cofactor guanylyltransferase (205 aa).

Residues 14-16 (LAG), Lys-27, Asp-77, and Asp-107 contribute to the GTP site. Asp-107 contacts Mg(2+).

Belongs to the MobA family. Monomer. Requires Mg(2+) as cofactor.

It is found in the cytoplasm. It carries out the reaction Mo-molybdopterin + GTP + H(+) = Mo-molybdopterin guanine dinucleotide + diphosphate. Functionally, transfers a GMP moiety from GTP to Mo-molybdopterin (Mo-MPT) cofactor (Moco or molybdenum cofactor) to form Mo-molybdopterin guanine dinucleotide (Mo-MGD) cofactor. The polypeptide is Molybdenum cofactor guanylyltransferase (Burkholderia cenocepacia (strain HI2424)).